Consider the following 210-residue polypeptide: Na(+)-translocating NADH-quinone reductase subunit D (210 aa).

5 helical membrane-spanning segments follow: residues 42-62, 72-92, 103-123, 131-151, and 178-198; these read FVMT…ISLI, IIAQ…VLKA, VFVG…AYAM, FLDG…VATV, and NGLL…IWGV.

The protein belongs to the NqrDE/RnfAE family. Composed of six subunits; NqrA, NqrB, NqrC, NqrD, NqrE and NqrF.

It localises to the cell inner membrane. It catalyses the reaction a ubiquinone + n Na(+)(in) + NADH + H(+) = a ubiquinol + n Na(+)(out) + NAD(+). Its function is as follows. NQR complex catalyzes the reduction of ubiquinone-1 to ubiquinol by two successive reactions, coupled with the transport of Na(+) ions from the cytoplasm to the periplasm. NqrA to NqrE are probably involved in the second step, the conversion of ubisemiquinone to ubiquinol. In Aeromonas salmonicida (strain A449), this protein is Na(+)-translocating NADH-quinone reductase subunit D.